The chain runs to 383 residues: 2-methylcitrate synthase 2 (383 aa).

Substrate contacts are provided by Arg73 and His195. Residue His230 is part of the active site. CoA is bound at residue 263-267; the sequence is VVMGF. His269 is a catalytic residue. Arg278 contributes to the substrate binding site. Asp320 is an active-site residue. Substrate-binding residues include Arg345 and Arg364.

Belongs to the citrate synthase family. As to quaternary structure, homodimer.

It carries out the reaction propanoyl-CoA + oxaloacetate + H2O = (2S,3S)-2-methylcitrate + CoA + H(+). The catalysed reaction is oxaloacetate + acetyl-CoA + H2O = citrate + CoA + H(+). Its pathway is organic acid metabolism; propanoate degradation. It functions in the pathway carbohydrate metabolism; tricarboxylic acid cycle; isocitrate from oxaloacetate: step 1/2. Involved in the catabolism of short chain fatty acids (SCFA) via the tricarboxylic acid (TCA)(acetyl degradation route) and via the 2-methylcitrate cycle I (propionate degradation route). Catalyzes the Claisen condensation of propionyl-CoA and oxaloacetate (OAA) to yield 2-methylcitrate (2-MC) and CoA. Also catalyzes the condensation of oxaloacetate with acetyl-CoA but with a lower specificity. The chain is 2-methylcitrate synthase 2 (prpC2) from Corynebacterium glutamicum (strain ATCC 13032 / DSM 20300 / JCM 1318 / BCRC 11384 / CCUG 27702 / LMG 3730 / NBRC 12168 / NCIMB 10025 / NRRL B-2784 / 534).